The primary structure comprises 329 residues: tRNA uridine(34) hydroxylase (329 aa).

One can recognise a Rhodanese domain in the interval 123–217 (SDPDVILVDT…YLEEVPEEES (95 aa)). Cys-177 acts as the Cysteine persulfide intermediate in catalysis. The disordered stretch occupies residues 285 to 329 (REKQVQLSNARGETHVGGDAAHLIDQRKKEKLAHKEQQRSGKKAK). A compositionally biased stretch (basic and acidic residues) spans 296-323 (GETHVGGDAAHLIDQRKKEKLAHKEQQR).

Belongs to the TrhO family.

It catalyses the reaction uridine(34) in tRNA + AH2 + O2 = 5-hydroxyuridine(34) in tRNA + A + H2O. Catalyzes oxygen-dependent 5-hydroxyuridine (ho5U) modification at position 34 in tRNAs. The chain is tRNA uridine(34) hydroxylase from Vibrio atlanticus (strain LGP32) (Vibrio splendidus (strain Mel32)).